A 622-amino-acid polypeptide reads, in one-letter code: Probable potassium transport system protein Kup (622 aa).

12 consecutive transmembrane segments (helical) span residues 8-28, 50-70, 103-123, 137-157, 168-188, 203-223, 247-267, 285-305, 337-357, 366-386, 393-413, and 419-439; these read LAAL…TSVL, ILSI…VVLV, LAVG…TPAI, PHFK…LFAV, FFGP…LAHI, ALGF…AVVL, WFGV…ALLL, ALIP…QALI, IYMP…VVMF, AYGI…FFVI, PLAL…AFFA, and LFQG…LMMT.

This sequence belongs to the HAK/KUP transporter (TC 2.A.72) family.

It is found in the cell inner membrane. The enzyme catalyses K(+)(in) + H(+)(in) = K(+)(out) + H(+)(out). Transport of potassium into the cell. Likely operates as a K(+):H(+) symporter. This is Probable potassium transport system protein Kup from Verminephrobacter eiseniae (strain EF01-2).